We begin with the raw amino-acid sequence, 261 residues long: Phosphatidylglycerol--prolipoprotein diacylglyceryl transferase (261 aa).

7 helical membrane-spanning segments follow: residues 19–39 (VHWY…LALY), 56–76 (LIFY…MLFY), 92–112 (WRGG…TWIF), 126–146 (FVVP…FING), 173–193 (QLYE…WFSA), 199–219 (FAVS…AEFF), and 227–247 (GFVA…MIII). Arg139 is an a 1,2-diacyl-sn-glycero-3-phospho-(1'-sn-glycerol) binding site.

The protein belongs to the Lgt family.

It localises to the cell inner membrane. The catalysed reaction is L-cysteinyl-[prolipoprotein] + a 1,2-diacyl-sn-glycero-3-phospho-(1'-sn-glycerol) = an S-1,2-diacyl-sn-glyceryl-L-cysteinyl-[prolipoprotein] + sn-glycerol 1-phosphate + H(+). The protein operates within protein modification; lipoprotein biosynthesis (diacylglyceryl transfer). In terms of biological role, catalyzes the transfer of the diacylglyceryl group from phosphatidylglycerol to the sulfhydryl group of the N-terminal cysteine of a prolipoprotein, the first step in the formation of mature lipoproteins. This Coxiella burnetii (strain CbuK_Q154) (Coxiella burnetii (strain Q154)) protein is Phosphatidylglycerol--prolipoprotein diacylglyceryl transferase.